The chain runs to 339 residues: HTH-type transcriptional regulator PtxS (339 aa).

An HTH lacI-type domain is found at 12–67 (VTISEVARVAGVSKATVSRYIGGDRQLLAEATAKRLEEVIERLGYRPNQMARGLKR). Positions 14–33 (ISEVARVAGVSKATVSRYIG) form a DNA-binding region, H-T-H motif.

As to quaternary structure, homodimer in solution.

With respect to regulation, 2-ketogluconate acts as a molecular effector and causes dissociation of PtxS from its target promoter. In terms of biological role, negatively regulates glucose metabolism by binding directly to the promoter region of the kgu and gad operons. It also negatively regulates its own synthesis. This chain is HTH-type transcriptional regulator PtxS, found in Pseudomonas putida (strain ATCC 47054 / DSM 6125 / CFBP 8728 / NCIMB 11950 / KT2440).